A 529-amino-acid polypeptide reads, in one-letter code: GTPase Obg (529 aa).

The region spanning 2–159 is the Obg domain; the sequence is ASFVDRVVLH…SDIVLELKSI (158 aa). In terms of domain architecture, OBG-type G spans 160–343; sequence ADIALVGFPS…LGFAMAEIVK (184 aa). Residues 166–173, 191–195, 212–215, 295–298, and 324–326 each bind GTP; these read GFPSAGKS, FTTLI, DVPG, NKVD, and SAT. The Mg(2+) site is built by Ser-173 and Thr-193. Residues 363–447 enclose the OCT domain; the sequence is PRAVNETGFR…DDGVVFDWEP (85 aa). The tract at residues 461–529 is disordered; that stretch reads GTDIRFADTG…ESGLDSGDES (69 aa). The span at 462 to 502 shows a compositional bias: basic and acidic residues; sequence TDIRFADTGDRPTRSQKREEQQERRDAKAAARAELEAERKA.

It belongs to the TRAFAC class OBG-HflX-like GTPase superfamily. OBG GTPase family. In terms of assembly, monomer. Requires Mg(2+) as cofactor.

The protein localises to the cytoplasm. Its function is as follows. An essential GTPase which binds GTP, GDP and possibly (p)ppGpp with moderate affinity, with high nucleotide exchange rates and a fairly low GTP hydrolysis rate. Plays a role in control of the cell cycle, stress response, ribosome biogenesis and in those bacteria that undergo differentiation, in morphogenesis control. The polypeptide is GTPase Obg (Pseudarthrobacter chlorophenolicus (strain ATCC 700700 / DSM 12829 / CIP 107037 / JCM 12360 / KCTC 9906 / NCIMB 13794 / A6) (Arthrobacter chlorophenolicus)).